Reading from the N-terminus, the 1588-residue chain is Paternally-expressed gene 3 protein (1588 aa).

The 83-residue stretch at 46–128 (HQRFRNLIYV…TLLENYKEMY (83 aa)) folds into the SCAN box domain. Disordered regions lie at residues 128–231 (YQPE…YQNV), 265–304 (GHSH…RRGI), and 317–347 (KFIK…MSDD). The span at 129 to 142 (QPEDDNNSDVTSDD) shows a compositional bias: acidic residues. Basic and acidic residues-rich tracts occupy residues 143–152 (DMTRNRRESS), 160–181 (FSDR…DRWS), 205–224 (FEMD…RSQD), and 293–304 (PEAKKSTHRRGI). C2H2-type zinc fingers lie at residues 452–474 (YVCD…QIMH), 505–527 (FECK…RKIH), and 563–585 (YECR…QKIH). The segment covering 588-607 (DDKDNEREHERERERERGET) has biased composition (basic and acidic residues). Residues 588–608 (DDKDNEREHERERERERGETF) form a disordered region. The segment at 627–649 (YECKVCGETFLHSSSLKEHQKIH) adopts a C2H2-type 4 zinc-finger fold. Disordered regions lie at residues 839–889 (VASK…SKNR) and 905–929 (QKSV…SSNV). The segment covering 868–881 (LNDKRQKIPARENP) has biased composition (basic and acidic residues). Residues 969 to 991 (YECQECGECFAHSSDLTEHQKIH) form a C2H2-type 5 zinc finger. Positions 1056-1104 (EKSHGEESQGENTDGEETHSEETHGQETIEDPVIQGSDMEDPQKDDPDD) are disordered. Residues 1071-1082 (EETHSEETHGQE) are compositionally biased toward basic and acidic residues. 5 C2H2-type zinc fingers span residues 1107-1129 (YECE…QKVH), 1163-1185 (YECP…QRIH), 1225-1247 (IRCL…MRLH), 1282-1304 (FECA…VTVH), and 1332-1354 (YECK…KELH). Positions 1396–1415 (EPEVEAAEPEVEAAEPEVEA) are enriched in acidic residues. A disordered region spans residues 1396 to 1495 (EPEVEAAEPE…GIEDPEEGED (100 aa)). 7 consecutive repeat copies span residues 1397–1403 (PEVEAAE), 1404–1410 (PEVEAAE), 1411–1417 (PEVEAAE), 1418–1422 (PNGEA), 1425–1429 (PDGEA), 1432–1436 (PIGEA), and 1439–1443 (PNGEA). The segment at 1397-1417 (PEVEAAEPEVEAAEPEVEAAE) is 3 X 7 AA repeat of P-E-V-E-A-A-E. The interval 1418 to 1443 (PNGEAEGPDGEAAEPIGEAGQPNGEA) is 4 X 5 AA repeat of P-X-G-E-A. Acidic residues-rich tracts occupy residues 1449–1466 (DADE…ERAE) and 1475–1495 (PEGD…EGED). C2H2-type zinc fingers lie at residues 1505–1527 (YDCH…LKTH) and 1564–1586 (FKCD…QNTH).

The protein belongs to the krueppel C2H2-type zinc-finger protein family. In terms of assembly, homodimer. Interacts with SIAH1A and SIAH2. Interacts with TRAF2. As to expression, brain, glial cells, astrocytes, embryo, placenta, testis, ovary and uterus. In the placenta it is found in the layer of villous cytotrophoblast cells while in the ovary it is found in the cells of the ovarian stroma including the thecal layers around the follicles. Expression is highly repressed in glioma cell lines.

Its subcellular location is the nucleus. The protein localises to the cytoplasm. Its function is as follows. Induces apoptosis in cooperation with SIAH1A. Acts as a mediator between p53/TP53 and BAX in a neuronal death pathway that is activated by DNA damage. Acts synergistically with TRAF2 and inhibits TNF induced apoptosis through activation of NF-kappa-B. Possesses a tumor suppressing activity in glioma cells. The polypeptide is Paternally-expressed gene 3 protein (PEG3) (Homo sapiens (Human)).